The sequence spans 239 residues: tRNA (guanine-N(7)-)-methyltransferase (239 aa).

Residues Glu-69, Glu-94, Asp-121, and Asp-144 each coordinate S-adenosyl-L-methionine. Residue Asp-144 is part of the active site. Lys-148 lines the substrate pocket. Residues 150–155 (RHNKRR) form an interaction with RNA region. Substrate-binding positions include Asp-180 and 217–220 (TKFE).

This sequence belongs to the class I-like SAM-binding methyltransferase superfamily. TrmB family. As to quaternary structure, monomer.

It carries out the reaction guanosine(46) in tRNA + S-adenosyl-L-methionine = N(7)-methylguanosine(46) in tRNA + S-adenosyl-L-homocysteine. Its pathway is tRNA modification; N(7)-methylguanine-tRNA biosynthesis. Its function is as follows. Catalyzes the formation of N(7)-methylguanine at position 46 (m7G46) in tRNA. The protein is tRNA (guanine-N(7)-)-methyltransferase of Yersinia pseudotuberculosis serotype O:1b (strain IP 31758).